The chain runs to 72 residues: Cytochrome b-c1 complex subunit 9 (72 aa).

At 1 to 27 the chain is on the mitochondrial matrix side; the sequence is MESAARRSGGGVLEGFYRLVMRRTPVY. A helical transmembrane segment spans residues 28–53; that stretch reads VTFVIAGALLGERAVDYGVKTLWEKN. Residues 54-72 lie on the Mitochondrial intermembrane side of the membrane; it reads NVGKRYEDISVLGQRPVDE.

It belongs to the UQCR10/QCR9 family. As to quaternary structure, component of the ubiquinol-cytochrome c oxidoreductase (cytochrome b-c1 complex, complex III, CIII), a multisubunit enzyme composed of 3 respiratory subunits cytochrome b, cytochrome c1 and Rieske protein, 2 core protein subunits, and additional low-molecular weight protein subunits. The complex exists as an obligatory dimer and forms supercomplexes (SCs) in the inner mitochondrial membrane with cytochrome c oxidase (complex IV, CIV).

Its subcellular location is the mitochondrion inner membrane. In terms of biological role, component of the ubiquinol-cytochrome c oxidoreductase, a multisubunit transmembrane complex that is part of the mitochondrial electron transport chain which drives oxidative phosphorylation. The respiratory chain contains 3 multisubunit complexes succinate dehydrogenase (complex II, CII), ubiquinol-cytochrome c oxidoreductase (cytochrome b-c1 complex, complex III, CIII) and cytochrome c oxidase (complex IV, CIV), that cooperate to transfer electrons derived from NADH and succinate to molecular oxygen, creating an electrochemical gradient over the inner membrane that drives transmembrane transport and the ATP synthase. The cytochrome b-c1 complex catalyzes electron transfer from ubiquinol to cytochrome c, linking this redox reaction to translocation of protons across the mitochondrial inner membrane, with protons being carried across the membrane as hydrogens on the quinol. In the process called Q cycle, 2 protons are consumed from the matrix, 4 protons are released into the intermembrane space and 2 electrons are passed to cytochrome c. In Solanum tuberosum (Potato), this protein is Cytochrome b-c1 complex subunit 9.